Consider the following 389-residue polypeptide: tRNA-specific 2-thiouridylase MnmA (389 aa).

Residues 21–28 and leucine 47 contribute to the ATP site; that span reads AMSGGVDS. The active-site Nucleophile is cysteine 115. A disulfide bridge connects residues cysteine 115 and cysteine 212. Glycine 139 provides a ligand contact to ATP. An interaction with tRNA region spans residues 162–164; sequence RDQ. The Cysteine persulfide intermediate role is filled by cysteine 212.

It belongs to the MnmA/TRMU family.

The protein resides in the cytoplasm. The enzyme catalyses S-sulfanyl-L-cysteinyl-[protein] + uridine(34) in tRNA + AH2 + ATP = 2-thiouridine(34) in tRNA + L-cysteinyl-[protein] + A + AMP + diphosphate + H(+). In terms of biological role, catalyzes the 2-thiolation of uridine at the wobble position (U34) of tRNA, leading to the formation of s(2)U34. The polypeptide is tRNA-specific 2-thiouridylase MnmA (Xanthobacter autotrophicus (strain ATCC BAA-1158 / Py2)).